The following is a 217-amino-acid chain: Protein matrimony (217 aa).

The POLO box domain (PBD)-binding signature appears at Ser-39–Pro-41. Phosphoserine is present on residues Ser-63 and Ser-66. The interval Lys-83–Pro-106 is disordered. Residues Asn-157–Leu-217 enclose the SAM domain.

As to quaternary structure, interacts with polo. Interacts with cort. Post-translationally, probably ubiquitinated: degraded during the oocyte-to-embryo transition by the anaphase promoting complex/cyclosome (APC/C) containing cort protein.

The protein resides in the nucleus. It is found in the chromosome. Its function is as follows. Polo kinase inhibitor required to maintain G2 arrest in the meiotic cell cycle in females. Holds heterochromatically paired homologs together from the end of pachytene until metaphase I. Haploinsufficient locus for homologous achiasmate segregation and may be required for the maintenance of heterochromatic pairings. The polypeptide is Protein matrimony (Drosophila melanogaster (Fruit fly)).